Here is a 300-residue protein sequence, read N- to C-terminus: uncharacterized protein (300 aa).

Topologically, residues 1–7 (MGSTRKG) are periplasmic. The helical transmembrane segment at 8 to 28 (MLNVLIAAVLWGSSGVCAQYI) threads the bilayer. Residues 16–145 (VLWGSSGVCA…SLIGTFLLVT (130 aa)) enclose the EamA 1 domain. Residues 29-45 (MEQSRMSSQFLTMIRLL) are Cytoplasmic-facing. Residues 46 to 66 (FAGLILVTFSFMHGDKIFSIL) form a helical membrane-spanning segment. The Periplasmic portion of the chain corresponds to 67-71 (KNRKD). A helical transmembrane segment spans residues 72 to 92 (ALSLLIFSVVGALTVQLTFLL). Over 93–99 (TIEKSNA) the chain is Cytoplasmic. The chain crosses the membrane as a helical span at residues 100–120 (ATATVLQFLSPTIIVAWFALA). The Periplasmic portion of the chain corresponds to 121–124 (RRTR). The chain crosses the membrane as a helical span at residues 125–145 (PGILVLTAILTSLIGTFLLVT). Over 146 to 151 (HGNPTS) the chain is Cytoplasmic. Residues 152–172 (LSISSAALFWGIASAFAAAFY) form a helical membrane-spanning segment. One can recognise an EamA 2 domain in the interval 167–291 (FAAAFYTTWP…ILSSVILISL (125 aa)). At 173–184 (TTWPSRLIAQYG) the chain is on the periplasmic side. The chain crosses the membrane as a helical span at residues 185-205 (TLPVVGWSMSFGGLILLPFYA). Topologically, residues 206–216 (KEGTHFAVSGS) are cytoplasmic. Residues 217-237 (LILAFFYLVVIGTSLTFSLYL) traverse the membrane as a helical segment. Over 238–263 (KGAQLIGGPKASILSCAEPLSSALLS) the chain is Periplasmic. A helical membrane pass occupies residues 264 to 284 (LLLLGISFTLPDWLGTLLILS). The Cytoplasmic segment spans residues 285–300 (SVILISLDSRRRARAA).

The protein belongs to the EamA transporter family.

The protein resides in the cell inner membrane. This is an uncharacterized protein from Salmonella typhimurium (strain LT2 / SGSC1412 / ATCC 700720).